We begin with the raw amino-acid sequence, 352 residues long: MGNFGRVPVGIVGASGYGGVQLVRLLMDHPEIELVYLGGESSVGKSFASLYPHLAHAVKLSIEEVDPEVIARRCEVVFLSMPNGLACQIVPTLLEKGCKVLDLSADYRFRNLTTYTTWYGVERSDRTTADTAIYGLPELYRDRISEAQLVGCPGSYPTASLLALSPLLKQGLIVPETAIVDAKSGTSGGGREAKTYLLLAEADNSLAPYSVVRHRHTPEIEQICSDLAGHEVTVQFTPHLVPIVRGILATVYATLRDPGLVGDDLTTIYTAFYRNSPWVKVCESGIYPQTKWAAGSNLCYIGVEVDPRTGRVIGMSVIDNLIKGQAGQAIQCLNIMMGWDETLGLPKMGFYP.

The protein belongs to the NAGSA dehydrogenase family. Type 1 subfamily.

It localises to the cytoplasm. The enzyme catalyses N-acetyl-L-glutamate 5-semialdehyde + phosphate + NADP(+) = N-acetyl-L-glutamyl 5-phosphate + NADPH + H(+). The protein operates within amino-acid biosynthesis; L-arginine biosynthesis; N(2)-acetyl-L-ornithine from L-glutamate: step 3/4. In terms of biological role, catalyzes the NADPH-dependent reduction of N-acetyl-5-glutamyl phosphate to yield N-acetyl-L-glutamate 5-semialdehyde. The protein is N-acetyl-gamma-glutamyl-phosphate reductase of Nostoc ellipsosporum.